The following is a 210-amino-acid chain: Adenylate kinase isoenzyme 1 (210 aa).

30 to 35 (GSGKGT) contributes to the ATP binding site. The tract at residues 50–79 (SSGDLLRDEVKSGSPRGAQLTAIMESGALV) is NMP. AMP-binding positions include S51, R56, 77–79 (ALV), 107–110 (GYPR), and Q114. The interval 144–154 (HRAQTSGRADD) is LID. R145 contributes to the ATP binding site. Residues R151 and R162 each contribute to the AMP site. G190 is an ATP binding site.

Belongs to the adenylate kinase family. AK1 subfamily. Monomer.

Its subcellular location is the cytoplasm. The catalysed reaction is AMP + ATP = 2 ADP. In terms of biological role, catalyzes the reversible transfer of the terminal phosphate group between ATP and AMP. Plays an important role in cellular energy homeostasis and in adenine nucleotide metabolism. This Caenorhabditis elegans protein is Adenylate kinase isoenzyme 1.